Here is a 601-residue protein sequence, read N- to C-terminus: MDNKQSRTRNFSIIAHIDHGKSTLADRLIQQTGLVSERDMKSQLLDNMDLERERGITIKLQNIRLMYKAKDGNEYYLNLIDTPGHVDFNYEVSRSLAACEGALLVVDAAQGVEAQTLANVYLAIDQDLEILPIINKIDLPSARPEEVKNEIEDLIGLDSSEAPLISAKTGLNIEDVLEDIVKNVPPPKGDNEAPLKALIFDSYYDAYKGVVAYVRVFEGTVKKGMTIKMMNTNKKFEVTEVGVMAPGQTELSELSAGDVGYIAASIKDIRSCRVGDTITDSNNPTEEPLPGYKKATPMVYCGIYPGEGEKYENVRDALEKLQVNDAALEYEAETSAALGFGFRCGFLGLLHMEIMQERLEREFNLDIITTAPSVIYRVTKMDGEVVMIQNPANLPEPSEIKMIEEPIVKGDIIVPKDYVGVVMELCQERRGNMLNMEYIDERRVMLHYDLPLNEVVYDFFDALKSRTRGYGSLDYEVKGYVASTLVKLDILINKEQVDALSFIVHETRAFPRGKAMCEKLKGEIPRHQFAIPIQAAVGNKVIARETISALRKDVLAKCYGGDISRKKKLLEKQKEGKKRMRQIGSVEVPQKAFMSVLKLDE.

Residues S6 to K188 enclose the tr-type G domain. Residues D18–T23 and N135–D138 contribute to the GTP site.

This sequence belongs to the TRAFAC class translation factor GTPase superfamily. Classic translation factor GTPase family. LepA subfamily.

It localises to the cell membrane. The enzyme catalyses GTP + H2O = GDP + phosphate + H(+). Functionally, required for accurate and efficient protein synthesis under certain stress conditions. May act as a fidelity factor of the translation reaction, by catalyzing a one-codon backward translocation of tRNAs on improperly translocated ribosomes. Back-translocation proceeds from a post-translocation (POST) complex to a pre-translocation (PRE) complex, thus giving elongation factor G a second chance to translocate the tRNAs correctly. Binds to ribosomes in a GTP-dependent manner. This chain is Elongation factor 4, found in Clostridioides difficile (strain 630) (Peptoclostridium difficile).